Here is a 244-residue protein sequence, read N- to C-terminus: Phosphate propanoyltransferase (244 aa).

A CoA-binding site is contributed by 52–54; sequence ISA. Zn(2+) is bound by residues His56 and His58. Arg106 lines the CoA pocket. Arg112 provides a ligand contact to phosphate. Glu118, His166, His168, and His214 together coordinate Zn(2+). Asn221 provides a ligand contact to CoA.

Belongs to the PduL family. In terms of assembly, full-length protein forms large oligomers. Possible homotrimer and monomer, when purified in the absence of the encapsulation peptide (EP, residues 1-20). The EP may influence oligomerization. Requires Zn(2+) as cofactor.

It localises to the bacterial microcompartment. The catalysed reaction is propanoyl-CoA + phosphate = propanoyl phosphate + CoA. Part of a bacterial microcompartment (BMC) locus required for growth on plant and algal sugars, including L-fucose and L-rhamnose. Thought to be active on lactyl-CoA in a lactaldehyde-degradation pathway. CoA is regenerated within the BMC via this enzyme, although there must also be cofactor transport across the BMC. Directly targeted to the BMC. This Planctopirus limnophila (strain ATCC 43296 / DSM 3776 / IFAM 1008 / Mu 290) (Planctomyces limnophilus) protein is Phosphate propanoyltransferase.